An 889-amino-acid polypeptide reads, in one-letter code: Alanine--tRNA ligase (889 aa).

Zn(2+) is bound by residues His-574, His-578, Cys-682, and His-686.

This sequence belongs to the class-II aminoacyl-tRNA synthetase family. It depends on Zn(2+) as a cofactor.

Its subcellular location is the cytoplasm. It carries out the reaction tRNA(Ala) + L-alanine + ATP = L-alanyl-tRNA(Ala) + AMP + diphosphate. Its function is as follows. Catalyzes the attachment of alanine to tRNA(Ala) in a two-step reaction: alanine is first activated by ATP to form Ala-AMP and then transferred to the acceptor end of tRNA(Ala). Also edits incorrectly charged Ser-tRNA(Ala) and Gly-tRNA(Ala) via its editing domain. The sequence is that of Alanine--tRNA ligase from Orientia tsutsugamushi (strain Ikeda) (Rickettsia tsutsugamushi).